Consider the following 93-residue polypeptide: Putative septation protein SpoVG (93 aa).

It belongs to the SpoVG family.

Could be involved in septation. The protein is Putative septation protein SpoVG of Fusobacterium nucleatum subsp. nucleatum (strain ATCC 25586 / DSM 15643 / BCRC 10681 / CIP 101130 / JCM 8532 / KCTC 2640 / LMG 13131 / VPI 4355).